A 147-amino-acid chain; its full sequence is UPF0460 protein in nifX-nifW intergenic region (147 aa).

It belongs to the UPF0460 family.

This chain is UPF0460 protein in nifX-nifW intergenic region, found in Frankia alni.